The sequence spans 384 residues: Formate dehydrogenase, chloroplastic/mitochondrial (384 aa).

Residues 1–29 constitute a chloroplast and mitochondrion transit peptide; that stretch reads MAMRQAAKATIRACSSSSSSGYFARRQFN. Residues Ile128 and Asn152 each contribute to the substrate site. Residues 207-208, Asp227, 262-266, Asn288, Asp314, and 338-341 contribute to the NAD(+) site; these read RI, PLTEK, and HTSG.

Belongs to the D-isomer specific 2-hydroxyacid dehydrogenase family. FDH subfamily. As to quaternary structure, homodimer.

Its subcellular location is the mitochondrion. It is found in the plastid. The protein resides in the chloroplast. It carries out the reaction formate + NAD(+) = CO2 + NADH. Catalyzes the NAD(+)-dependent oxidation of formate to carbon dioxide. Involved in the cell stress response. This chain is Formate dehydrogenase, chloroplastic/mitochondrial (FDH1), found in Arabidopsis thaliana (Mouse-ear cress).